The primary structure comprises 102 residues: MRRGELWFAATPGGDRPVLVLTRDPVADRIGAVVVVALTRTRRGLVSELELTAVENRVPSDCVVNFDNIHTLPRTAFRRRITRLSPARLHEACQTLRASTGC.

It belongs to the PemK/MazF family. As to quaternary structure, forms a complex with cognate antitoxin MazE2.

In terms of biological role, toxic component of a type II toxin-antitoxin (TA) system. Acts as an endoribonuclease. Neutralized by coexpression with cognate antitoxin MazE2. The sequence is that of Probable endoribonuclease MazF2 (mazF2) from Mycobacterium tuberculosis (strain CDC 1551 / Oshkosh).